Consider the following 485-residue polypeptide: Glycogen synthase (485 aa).

Lysine 20 contacts ADP-alpha-D-glucose.

It belongs to the glycosyltransferase 1 family. Bacterial/plant glycogen synthase subfamily.

The enzyme catalyses [(1-&gt;4)-alpha-D-glucosyl](n) + ADP-alpha-D-glucose = [(1-&gt;4)-alpha-D-glucosyl](n+1) + ADP + H(+). Its pathway is glycan biosynthesis; glycogen biosynthesis. Synthesizes alpha-1,4-glucan chains using ADP-glucose. This Vibrio parahaemolyticus serotype O3:K6 (strain RIMD 2210633) protein is Glycogen synthase.